The following is a 430-amino-acid chain: tRNA(Ile)-lysidine synthase (430 aa).

An ATP-binding site is contributed by 27 to 32; that stretch reads SGGSDS.

This sequence belongs to the tRNA(Ile)-lysidine synthase family.

It localises to the cytoplasm. The enzyme catalyses cytidine(34) in tRNA(Ile2) + L-lysine + ATP = lysidine(34) in tRNA(Ile2) + AMP + diphosphate + H(+). Its function is as follows. Ligates lysine onto the cytidine present at position 34 of the AUA codon-specific tRNA(Ile) that contains the anticodon CAU, in an ATP-dependent manner. Cytidine is converted to lysidine, thus changing the amino acid specificity of the tRNA from methionine to isoleucine. This Rickettsia felis (strain ATCC VR-1525 / URRWXCal2) (Rickettsia azadi) protein is tRNA(Ile)-lysidine synthase.